The sequence spans 284 residues: UPF0294 protein VV2535 (284 aa).

This sequence belongs to the UPF0294 family.

Its subcellular location is the cytoplasm. The chain is UPF0294 protein VV2535 from Vibrio vulnificus (strain YJ016).